The sequence spans 207 residues: Small ribosomal subunit protein uS4 (207 aa).

Residues 31 to 53 (KAKFDSKPGQHGRTSGARTSDFG) are disordered. One can recognise an S4 RNA-binding domain in the interval 97–157 (SRLDNVVYRM…EKSKKQARIV (61 aa)).

It belongs to the universal ribosomal protein uS4 family. Part of the 30S ribosomal subunit. Contacts protein S5. The interaction surface between S4 and S5 is involved in control of translational fidelity.

One of the primary rRNA binding proteins, it binds directly to 16S rRNA where it nucleates assembly of the body of the 30S subunit. Its function is as follows. With S5 and S12 plays an important role in translational accuracy. The polypeptide is Small ribosomal subunit protein uS4 (Paracidovorax citrulli (strain AAC00-1) (Acidovorax citrulli)).